We begin with the raw amino-acid sequence, 286 residues long: GTP cyclohydrolase 1 type 2 homolog (286 aa).

His-66, His-67, Asp-103, His-254, and Glu-258 together coordinate a divalent metal cation.

It belongs to the GTP cyclohydrolase I type 2/NIF3 family. In terms of assembly, homohexamer.

In Treponema pallidum (strain Nichols), this protein is GTP cyclohydrolase 1 type 2 homolog.